We begin with the raw amino-acid sequence, 876 residues long: MSKSTAEIRQAFLDFFHSKGHQVVASSSLVPHNDPTLLFTNAGMNQFKDVFLGLDKRNYSRATTSQRCVRAGGKHNDLENVGYTARHHTFFEMLGNFSFGDYFKHDAIQFAWELLTSEKWFALPKERLWVTVYESDDEAYEIWEKEVGIPRERIIRIGDNKGAPYASDNFWQMGDTGPCGPCTEIFYDHGDHIWGGPPGSPEEDGDRYIEIWNIVFMQFNRQADGTMEPLPKPSVDTGMGLERIAAVLQHVNSNYDIDLFRTLIQAVAKVTGATDLSNKSLRVIADHIRSCAFLIADGVMPSNENRGYVLRRIIRRAVRHGNMLGAKETFFYKLVGPLIDVMGSAGEDLKRQQAQVEQVLKTEEEQFARTLERGLALLDEELAKLSGDTLDGETAFRLYDTYGFPVDLTADVCRERNIKVDEAGFEAAMEEQRRRAREASGFGADYNAMIRVDSASEFKGYDHLELNGKVTALFVDGKAVDAINAGQEAVVVLDQTPFYAESGGQVGDKGELKGANFSFAVEDTQKYGQAIGHIGKLAAGSLKVGDAVQADVDEARRARIRLNHSATHLMHAALRQVLGTHVSQKGSLVNDKVLRFDFSHNEAMKPEEIRAVEDLVNTQIRRNLPIETNIMDLEAAKAKGAMALFGEKYDERVRVLSMGDFSTELCGGTHASRTGDIGLFRIISESGTAAGVRRIEAVTGEGAIATVHADSDRLSEVAHLLKGDSNNLADKVRSVLERTRQLEKELQQLKEQAAAQESANLSSKAIDVNGVKLLVSELSGVEPKMLRTMVDDLKNQLGSTIIVLATVVEGKVSLIAGVSKDVTDRVKAGELIGMVAQQVGGKGGGRPDMAQAGGTDAAALPAALASVKGWVSAKLQ.

The interval 2-461 (SKSTAEIRQA…VDSASEFKGY (460 aa)) is catalytic. Lys-74 is subject to N6-acetyllysine. The tract at residues 553–705 (DEARRARIRL…EAVTGEGAIA (153 aa)) is editing. Residues His-564, His-568, Cys-666, and His-670 each contribute to the Zn(2+) site. The interval 699–808 (TGEGAIATVH…STIIVLATVV (110 aa)) is important for oligomerization. The interval 766 to 875 (IDVNGVKLLV…SVKGWVSAKL (110 aa)) is C-Ala domain.

The protein belongs to the class-II aminoacyl-tRNA synthetase family. In terms of assembly, homotetramer. The cofactor is Zn(2+).

The protein resides in the cytoplasm. It carries out the reaction tRNA(Ala) + L-alanine + ATP = L-alanyl-tRNA(Ala) + AMP + diphosphate. The enzyme catalyses (S)-lactate + ATP + H(+) = (S)-lactoyl-AMP + diphosphate. It catalyses the reaction (S)-lactoyl-AMP + L-lysyl-[protein] = N(6)-[(S)-lactoyl]-L-lysyl-[protein] + AMP + 2 H(+). Its activity is regulated as follows. Acetylation at Lys-74 decreases the alanylation activity for tRNA(Ala); a protein that is fully acetylated is inactive in vitro. Its function is as follows. Catalyzes the attachment of L-alanine to tRNA(Ala) in a two-step reaction: L-alanine is first activated by ATP to form Ala-AMP and then transferred to the acceptor end of tRNA(Ala). AlaRS also incorrectly activates the sterically smaller amino acid glycine as well as the sterically larger amino acid L-serine; generates 2-fold more mischarged Gly than Ser. These mischarged amino acids occur because the of inherent physicochemical limitations on discrimination between closely related amino acids (Ala, Gly and Ser) in the charging step. In presence of high levels of lactate, also acts as a protein lactyltransferase that mediates lactylation of lysine residues in target proteins. In terms of biological role, edits mischarged Ser-tRNA(Ala) and Gly-tRNA(Ala) but not incorrectly charged Ser-tRNA(Thr). Dtd edits Gly-tRNA(Ala) 4-fold better than does AlaRS. Functionally, attaches Ala to transfer-messenger RNA (tmRNA, also known as 10Sa RNA, the product of the ssrA gene). tmRNA plays a major role in rescue of stalled ribosomes via trans-translation. This is Alanine--tRNA ligase (alaS) from Escherichia coli (strain K12).